A 185-amino-acid polypeptide reads, in one-letter code: Ribosome-recycling factor (185 aa).

It belongs to the RRF family.

It is found in the cytoplasm. Functionally, responsible for the release of ribosomes from messenger RNA at the termination of protein biosynthesis. May increase the efficiency of translation by recycling ribosomes from one round of translation to another. The polypeptide is Ribosome-recycling factor (Streptococcus thermophilus (strain CNRZ 1066)).